Consider the following 63-residue polypeptide: Large ribosomal subunit protein eL24 (63 aa).

Zn(2+) is bound by residues C7, C10, C33, and C37. The C4-type zinc finger occupies 7-37 (CSFCGGSIEPGTGLMYVLRNGQILWFCSSKC).

Belongs to the eukaryotic ribosomal protein eL24 family. Part of the 50S ribosomal subunit. Forms a cluster with proteins L3 and L14. The cofactor is Zn(2+).

Binds to the 23S rRNA. The chain is Large ribosomal subunit protein eL24 from Aeropyrum pernix (strain ATCC 700893 / DSM 11879 / JCM 9820 / NBRC 100138 / K1).